A 478-amino-acid chain; its full sequence is Transcription factor PIF1 (478 aa).

Residue Thr10 is modified to Phosphothreonine; by CK2. 5 disordered regions span residues 56 to 80 (LHTK…QPSS), 122 to 144 (VSQV…PVRN), 172 to 210 (VRES…GGGA), 230 to 294 (TSSS…LSER), and 391 to 478 (TQTH…HTTG). Residues 69–80 (LPSMDPQQQPSS) show a composition bias toward low complexity. Low complexity predominate over residues 179-189 (SPSATPSAAAS). Thr197 is modified (phosphothreonine; by CK2). Residue Ser202 is modified to Phosphoserine; by CK2. Basic and acidic residues-rich tracts occupy residues 238–272 (SEIE…ETKQ) and 284–294 (RAAEVHNLSER). A bHLH domain is found at 284–333 (RAAEVHNLSERKRRDRINERMKALQELIPRCNKSDKASMLDEAIEYMKSL). Residues 415-426 (PNQQYDPTSGQP) are compositionally biased toward polar residues. Ser464, Ser465, Ser466, and Ser469 each carry phosphoserine; by CK2. Residues 465-478 (SSKESEDHGNHTTG) are compositionally biased toward basic and acidic residues.

As to quaternary structure, homodimer. Interacts with the photoactivated conformer (Pfr) of phytochromes A and B, PHYA and PHYB. Also interacts with APRR1/TOC1. Binds to RGL2, RGA and FHY3 (via N-terminus). Associates to PTAC12/HMR/PAP5 which acts as a transcriptional coactivator. Binds directly to PCH1 and PCHL; this interaction facilitates its association with phyB and its subsequent light-induced degradation. Post-translationally, phosphorylated at Thr-10, Thr-197, Ser-202, Ser-464, Ser-465, Ser-466 and Ser-469 by CK2. Phosphorylated and ubiquitinated after an exposure to light (especially red and far-red), in a phytochrome-dependent manner. Modified proteins undergo a proteasome-dependent degradation. Its stability and degradation plays a central role in photomorphogenesis of seedlings. Mainly expressed in leaves, stems and seedlings, and, to a lower extent, in fruits, flowers and roots.

The protein localises to the nucleus. With respect to regulation, DNA-binding ability is inhibited by PCH1 and PCHL to negatively regulate the expressions of its target genes. In terms of biological role, transcription activator. Negatively regulates chlorophyll biosynthesis and seed germination in the dark, and lightinduced degradation of PIF1 relieves this negative regulation to promote photomorphogenesis. Binds to the G-box motif (5'-CACGTG-3') found in many light-regulated promoters. Promotes the expression of SOM, and thus modulates responses to abscisic acid (ABA) and gibberellic acid (GA). This Arabidopsis thaliana (Mouse-ear cress) protein is Transcription factor PIF1.